The primary structure comprises 138 residues: Phosphoribosyl-AMP cyclohydrolase (138 aa).

Residue aspartate 84 coordinates Mg(2+). Position 85 (cysteine 85) interacts with Zn(2+). Positions 86 and 88 each coordinate Mg(2+). Positions 102 and 109 each coordinate Zn(2+).

This sequence belongs to the PRA-CH family. Homodimer. Mg(2+) is required as a cofactor. Zn(2+) serves as cofactor.

It localises to the cytoplasm. The catalysed reaction is 1-(5-phospho-beta-D-ribosyl)-5'-AMP + H2O = 1-(5-phospho-beta-D-ribosyl)-5-[(5-phospho-beta-D-ribosylamino)methylideneamino]imidazole-4-carboxamide. It participates in amino-acid biosynthesis; L-histidine biosynthesis; L-histidine from 5-phospho-alpha-D-ribose 1-diphosphate: step 3/9. Its function is as follows. Catalyzes the hydrolysis of the adenine ring of phosphoribosyl-AMP. This is Phosphoribosyl-AMP cyclohydrolase from Burkholderia lata (strain ATCC 17760 / DSM 23089 / LMG 22485 / NCIMB 9086 / R18194 / 383).